Reading from the N-terminus, the 221-residue chain is Large ribosomal subunit protein uL16y (221 aa).

Belongs to the universal ribosomal protein uL16 family. Component of the small ribosomal subunit. Mature ribosomes consist of a small (40S) and a large (60S) subunit. The 40S subunit contains about 33 different proteins and 1 molecule of RNA (18S). The 60S subunit contains about 49 different proteins and 3 molecules of RNA (25S, 5.8S and 5S).

In Arabidopsis thaliana (Mouse-ear cress), this protein is Large ribosomal subunit protein uL16y (RPL10B).